The following is a 488-amino-acid chain: Patatin-like protein 7 (488 aa).

A disordered region spans residues glutamine 23–methionine 49. The segment covering alanine 32–threonine 47 has biased composition (polar residues). The 201-residue stretch at leucine 101–isoleucine 301 folds into the PNPLA domain. The GXGXXG signature appears at glycine 105 to glycine 110. Catalysis depends on serine 145, which acts as the Nucleophile.

This sequence belongs to the patatin family. Highly expressed in roots and at lower levels in leaves, stems, flowers and siliques.

It localises to the cell membrane. Possesses non-specific lipolytic acyl hydrolase (LAH) activity. Catalyzes the hydrolysis of the galactolipids monogalactosyldiacylglycerol (MGDG) and digalactosyldiacylglycerol (DGDG), and the phoshpolipids phosphatidylcholine (PC), phosphatidylethanolamine (PE), phosphatidylglycerol (PG), phosphatidic acid (PA), phosphatidylserine (PS). Favors the release of fatty acid at the sn-2 position for PC. Possesses acyl-CoA thioesterase activity. Negatively affects disease resistance to the necrotic fungal pathogen Botrytis cinerea and the avirulent bacteria Pseudomonas syringae by promoting cell death and reducing the efficiency of the hypersensitive response, respectively. However, PLP2 contributes to resistance to cucumber mosaic virus (CMV), an obligate parasite inducing hypersensitive response. May negatively regulate oxylipin production, possibly via participating in membrane repair that includes removal of oxidatively modified lipids. Enzymatic products of PLP2 may influence cellulose content and cell elongation. The sequence is that of Patatin-like protein 7 (PLP7) from Arabidopsis thaliana (Mouse-ear cress).